The following is a 277-amino-acid chain: Acetyl-coenzyme A carboxylase carboxyl transferase subunit beta (277 aa).

The CoA carboxyltransferase N-terminal domain maps to 25-277 (LVRRCPVCHT…DLLRLHKGES (253 aa)). Zn(2+) is bound by residues cysteine 29, cysteine 32, cysteine 47, and cysteine 50. Residues 29-50 (CPVCHTTFLTDHWEPTRLCPAC) form a C4-type zinc finger.

The protein belongs to the AccD/PCCB family. Acetyl-CoA carboxylase is a heterohexamer composed of biotin carboxyl carrier protein (AccB), biotin carboxylase (AccC) and two subunits each of ACCase subunit alpha (AccA) and ACCase subunit beta (AccD). Zn(2+) is required as a cofactor.

It is found in the cytoplasm. It carries out the reaction N(6)-carboxybiotinyl-L-lysyl-[protein] + acetyl-CoA = N(6)-biotinyl-L-lysyl-[protein] + malonyl-CoA. Its pathway is lipid metabolism; malonyl-CoA biosynthesis; malonyl-CoA from acetyl-CoA: step 1/1. In terms of biological role, component of the acetyl coenzyme A carboxylase (ACC) complex. Biotin carboxylase (BC) catalyzes the carboxylation of biotin on its carrier protein (BCCP) and then the CO(2) group is transferred by the transcarboxylase to acetyl-CoA to form malonyl-CoA. In Levilactobacillus brevis (strain ATCC 367 / BCRC 12310 / CIP 105137 / JCM 1170 / LMG 11437 / NCIMB 947 / NCTC 947) (Lactobacillus brevis), this protein is Acetyl-coenzyme A carboxylase carboxyl transferase subunit beta.